Reading from the N-terminus, the 325-residue chain is All-trans-nonaprenyl-diphosphate synthase (geranyl-diphosphate specific) (325 aa).

Isopentenyl diphosphate is bound by residues Lys48, Arg51, and His81. Residues Asp88 and Asp92 each coordinate Mg(2+). Arg97 serves as a coordination point for an all-trans-polyprenyl diphosphate. Arg98 serves as a coordination point for isopentenyl diphosphate. Lys174, Thr175, Gln211, and Lys228 together coordinate an all-trans-polyprenyl diphosphate.

Belongs to the FPP/GGPP synthase family. As to quaternary structure, homodimer. The cofactor is Mg(2+).

It catalyses the reaction 7 isopentenyl diphosphate + (2E)-geranyl diphosphate = all-trans-nonaprenyl diphosphate + 7 diphosphate. Its function is as follows. catalyzes the sequential condensation of isopentenyl diphosphate (IPP) with the allylic substrate to give solanesyl diphosphate. Could be important to determine the side chain length of ubiquinone. This Rhodobacter capsulatus (Rhodopseudomonas capsulata) protein is All-trans-nonaprenyl-diphosphate synthase (geranyl-diphosphate specific) (sdsA).